The chain runs to 134 residues: Translation initiation factor 2 subunit beta (134 aa).

Belongs to the eIF-2-beta/eIF-5 family. Heterotrimer composed of an alpha, a beta and a gamma chain.

Functionally, eIF-2 functions in the early steps of protein synthesis by forming a ternary complex with GTP and initiator tRNA. The chain is Translation initiation factor 2 subunit beta from Pyrobaculum arsenaticum (strain DSM 13514 / JCM 11321 / PZ6).